A 1015-amino-acid chain; its full sequence is MPRATALGALVSLLLLLPLPRGAGGLGERPDATADYSELDGEEGTEQQLEHYHDPCKAAVFWGDIALDEDDLKLFHIDKARDWTKQTVGATGHSTGGLEEQASESSPDTTAMDTGTKEAGKDGRENTTLLHSPGTLHAAAKTFSPRVRRATTSRTERIWPGGVIPYVIGGNFTGSQRAIFKQAMRHWEKHTCVTFIERTDEESFIVFSYRTCGCCSYVGRRGGGPQAISIGKNCDKFGIVAHELGHVVGFWHEHTRPDRDQHVTIIRENIQPGQEYNFLKMEAGEVSSLGETYDFDSIMHYARNTFSRGVFLDTILPRQDDNGVRPTIGQRVRLSQGDIAQARKLYKCPACGETLQDTTGNFSAPGFPNGYPSYSHCVWRISVTPGEKIVLNFTSMDLFKSRLCWYDYVEVRDGYWRKAPLLGRFCGDKIPEPLVSTDSRLWVEFRSSSNILGKGFFAAYEATCGGDMNKDAGQIQSPNYPDDYRPSKECVWRITVSEGFHVGLTFQAFEIERHDSCAYDYLEVRDGPTEESALIGHFCGYEKPEDVKSSSNRLWMKFVSDGSINKAGFAANFFKEVDECSWPDHGGCEHRCVNTLGSYKCACDPGYELAADKKMCEVACGGFITKLNGTITSPGWPKEYPTNKNCVWQVVAPAQYRISLQFEVFELEGNDVCKYDFVEVRSGLSPDAKLHGRFCGSETPEVITSQSNNMRVEFKSDNTVSKRGFRAHFFSDKDECAKDNGGCQHECVNTFGSYLCRCRNGYWLHENGHDCKEAGCAHKISSVEGTLASPNWPDKYPSRRECTWNISSTAGHRVKLTFNEFEIEQHQECAYDHLEMYDGPDSLAPILGRFCGSKKPDPTVASGSSMFLRFYSDASVQRKGFQAVHSTECGGRLKAEVQTKELYSHAQFGDNNYPSEARCDWVIVAEDGYGVELTFRTFEVEEEADCGYDYMEAYDGYDSSAPRLGRFCGSGPLEEIYSAGDSLMIRFRTDDTINKKGFHARYTSTKFQDALHMKK.

Residues 1-25 (MPRATALGALVSLLLLLPLPRGAGG) form the signal peptide. Disordered regions lie at residues 24 to 49 (GGLGERPDATADYSELDGEEGTEQQL) and 88 to 130 (VGAT…TTLL). A propeptide spanning residues 26-149 (LGERPDATAD…AKTFSPRVRR (124 aa)) is cleaved from the precursor. A compositionally biased stretch (polar residues) spans 103 to 113 (SESSPDTTAMD). Positions 115 to 125 (GTKEAGKDGRE) are enriched in basic and acidic residues. The region spanning 149–349 (RATTSRTERI…AQARKLYKCP (201 aa)) is the Peptidase M12A domain. Asn-171 carries N-linked (GlcNAc...) asparagine glycosylation. Cystine bridges form between Cys-192/Cys-348, Cys-212/Cys-234, Cys-214/Cys-215, and Cys-351/Cys-377. His-242 provides a ligand contact to Zn(2+). The active site involves Glu-243. Residues His-246 and His-252 each contribute to the Zn(2+) site. CUB domains are found at residues 351-463 (CGET…YEAT) and 464-576 (CGGD…FFKE). N-linked (GlcNAc...) asparagine glycans are attached at residues Asn-361 and Asn-392. 12 cysteine pairs are disulfide-bonded: Cys-404–Cys-426, Cys-464–Cys-490, Cys-517–Cys-539, Cys-580–Cys-592, Cys-588–Cys-601, Cys-603–Cys-616, Cys-620–Cys-646, Cys-673–Cys-695, Cys-736–Cys-747, Cys-743–Cys-756, Cys-758–Cys-771, and Cys-776–Cys-802. The EGF-like 1; calcium-binding domain occupies 576–617 (EVDECSWPDHGGCEHRCVNTLGSYKCACDPGYELAADKKMCE). The region spanning 620–732 (CGGFITKLNG…RGFRAHFFSD (113 aa)) is the CUB 3 domain. Asn-628 carries an N-linked (GlcNAc...) asparagine glycan. The region spanning 732–772 (DKDECAKDNGGCQHECVNTFGSYLCRCRNGYWLHENGHDCK) is the EGF-like 2; calcium-binding domain. CUB domains are found at residues 776–888 (CAHK…HSTE) and 889–1005 (CGGR…YTST). Asn-805 carries an N-linked (GlcNAc...) asparagine glycan. 3 cysteine pairs are disulfide-bonded: Cys-829-Cys-851, Cys-889-Cys-919, and Cys-946-Cys-968. An omega-N-methylarginine mark is found at Arg-963 and Arg-966.

Zn(2+) serves as cofactor.

It localises to the secreted. Functionally, protease which specifically processes pro-lysyl oxidase. Required for the embryonic development. Predominant protease, which in the development, influences dorsal-ventral patterning and skeletogenesis. The protein is Tolloid-like protein 2 (TLL2) of Homo sapiens (Human).